The chain runs to 472 residues: MKQEVILVLDCGATNVRAIAVNRQGKIVARASTPNASDIAMENNTWHQWSLDAILQRFADCCRQINSELTECHIRGIAVTTFGVDGALVDKQGNLLYPIISWKCPRTAAVMDNIERLISAQRLQAISGVGAFSFNTLYKLVWLKENHPQLLERAHAWLFISSLINHRLTGEFTTDITMAGTSQMLDIQQRDFSPQILQATGIPRRLFPRLVEAGEQIGTLQNSAAAMLGLPVGIPVISAGHDTQFALFGAGAEQNEPVLSSGTWEILMVRSAQVDTSLLSQYAGSTCELDSQAGLYNPGMQWLASGVLEWVRKLFWTAETPWQMLIEEARLIAPGADGVKMQCDLLSCQNAGWQGVTLNTTRGHFYRAALEGLTAQLQRNLQMLEKIGHFKASELLLVGGGSRNTLWNQIKANMLDIPVKVLDDAETTVAGAALFGWYGVGEFNSPEEARAQIHYQYRYFYPQTEPEFIEEV.

It belongs to the FGGY kinase family. It depends on a divalent metal cation as a cofactor.

The enzyme catalyses L-fuculose + ATP = L-fuculose 1-phosphate + ADP + H(+). The protein operates within carbohydrate degradation; L-fucose degradation; L-lactaldehyde and glycerone phosphate from L-fucose: step 2/3. Its function is as follows. Catalyzes the phosphorylation of L-fuculose. Can also phosphorylate, with lower efficiency, D-ribulose, D-xylulose and D-fructose. The chain is L-fuculokinase from Escherichia coli (strain K12).